Here is a 325-residue protein sequence, read N- to C-terminus: Lipoyl synthase (325 aa).

Residues Cys68, Cys73, Cys79, Cys94, Cys98, Cys101, and Ser308 each contribute to the [4Fe-4S] cluster site. One can recognise a Radical SAM core domain in the interval Phe80–Thr297.

Belongs to the radical SAM superfamily. Lipoyl synthase family. It depends on [4Fe-4S] cluster as a cofactor.

The protein resides in the cytoplasm. The catalysed reaction is [[Fe-S] cluster scaffold protein carrying a second [4Fe-4S](2+) cluster] + N(6)-octanoyl-L-lysyl-[protein] + 2 oxidized [2Fe-2S]-[ferredoxin] + 2 S-adenosyl-L-methionine + 4 H(+) = [[Fe-S] cluster scaffold protein] + N(6)-[(R)-dihydrolipoyl]-L-lysyl-[protein] + 4 Fe(3+) + 2 hydrogen sulfide + 2 5'-deoxyadenosine + 2 L-methionine + 2 reduced [2Fe-2S]-[ferredoxin]. It participates in protein modification; protein lipoylation via endogenous pathway; protein N(6)-(lipoyl)lysine from octanoyl-[acyl-carrier-protein]: step 2/2. Functionally, catalyzes the radical-mediated insertion of two sulfur atoms into the C-6 and C-8 positions of the octanoyl moiety bound to the lipoyl domains of lipoate-dependent enzymes, thereby converting the octanoylated domains into lipoylated derivatives. The sequence is that of Lipoyl synthase from Alcanivorax borkumensis (strain ATCC 700651 / DSM 11573 / NCIMB 13689 / SK2).